The chain runs to 193 residues: UPF0301 protein Bfl251 (193 aa).

This sequence belongs to the UPF0301 (AlgH) family.

The protein is UPF0301 protein Bfl251 of Blochmanniella floridana.